Consider the following 453-residue polypeptide: 3-phosphoshikimate 1-carboxyvinyltransferase (453 aa).

The 3-phosphoshikimate site is built by lysine 28, serine 29, and arginine 33. Lysine 28 contributes to the phosphoenolpyruvate binding site. Positions 101 and 129 each coordinate phosphoenolpyruvate. The 3-phosphoshikimate site is built by serine 174, glutamine 176, aspartate 326, and lysine 353. A phosphoenolpyruvate-binding site is contributed by glutamine 176. Aspartate 326 (proton acceptor) is an active-site residue. Phosphoenolpyruvate-binding residues include arginine 357 and arginine 405.

The protein belongs to the EPSP synthase family. As to quaternary structure, monomer.

It localises to the cytoplasm. It catalyses the reaction 3-phosphoshikimate + phosphoenolpyruvate = 5-O-(1-carboxyvinyl)-3-phosphoshikimate + phosphate. The protein operates within metabolic intermediate biosynthesis; chorismate biosynthesis; chorismate from D-erythrose 4-phosphate and phosphoenolpyruvate: step 6/7. Catalyzes the transfer of the enolpyruvyl moiety of phosphoenolpyruvate (PEP) to the 5-hydroxyl of shikimate-3-phosphate (S3P) to produce enolpyruvyl shikimate-3-phosphate and inorganic phosphate. This Zymomonas mobilis subsp. mobilis (strain ATCC 31821 / ZM4 / CP4) protein is 3-phosphoshikimate 1-carboxyvinyltransferase.